A 236-amino-acid polypeptide reads, in one-letter code: Orotidine 5'-phosphate decarboxylase (236 aa).

Substrate is bound by residues aspartate 16, lysine 38, 65 to 74 (DLKYHDIPNT), threonine 124, arginine 185, glutamine 194, glycine 214, and arginine 215. Catalysis depends on lysine 67, which acts as the Proton donor.

It belongs to the OMP decarboxylase family. Type 1 subfamily. As to quaternary structure, homodimer.

It carries out the reaction orotidine 5'-phosphate + H(+) = UMP + CO2. It participates in pyrimidine metabolism; UMP biosynthesis via de novo pathway; UMP from orotate: step 2/2. Catalyzes the decarboxylation of orotidine 5'-monophosphate (OMP) to uridine 5'-monophosphate (UMP). The chain is Orotidine 5'-phosphate decarboxylase from Hydrogenovibrio crunogenus (strain DSM 25203 / XCL-2) (Thiomicrospira crunogena).